Reading from the N-terminus, the 350-residue chain is Ribosomal RNA large subunit methyltransferase M (350 aa).

S-adenosyl-L-methionine contacts are provided by residues 217 to 220 (APGG), aspartate 236, aspartate 256, and aspartate 272. Catalysis depends on lysine 301, which acts as the Proton acceptor.

It belongs to the class I-like SAM-binding methyltransferase superfamily. RNA methyltransferase RlmE family. RlmM subfamily. As to quaternary structure, monomer.

The protein localises to the cytoplasm. The enzyme catalyses cytidine(2498) in 23S rRNA + S-adenosyl-L-methionine = 2'-O-methylcytidine(2498) in 23S rRNA + S-adenosyl-L-homocysteine + H(+). Functionally, catalyzes the 2'-O-methylation at nucleotide C2498 in 23S rRNA. The polypeptide is Ribosomal RNA large subunit methyltransferase M (Cellvibrio japonicus (strain Ueda107) (Pseudomonas fluorescens subsp. cellulosa)).